The chain runs to 377 residues: Succinyl-diaminopimelate desuccinylase (377 aa).

H66 provides a ligand contact to Zn(2+). Residue D68 is part of the active site. A Zn(2+)-binding site is contributed by D99. E133 acts as the Proton acceptor in catalysis. Positions 134, 162, and 348 each coordinate Zn(2+).

This sequence belongs to the peptidase M20A family. DapE subfamily. As to quaternary structure, homodimer. Zn(2+) is required as a cofactor. Co(2+) serves as cofactor.

It carries out the reaction N-succinyl-(2S,6S)-2,6-diaminopimelate + H2O = (2S,6S)-2,6-diaminopimelate + succinate. The protein operates within amino-acid biosynthesis; L-lysine biosynthesis via DAP pathway; LL-2,6-diaminopimelate from (S)-tetrahydrodipicolinate (succinylase route): step 3/3. Functionally, catalyzes the hydrolysis of N-succinyl-L,L-diaminopimelic acid (SDAP), forming succinate and LL-2,6-diaminopimelate (DAP), an intermediate involved in the bacterial biosynthesis of lysine and meso-diaminopimelic acid, an essential component of bacterial cell walls. In Chromobacterium violaceum (strain ATCC 12472 / DSM 30191 / JCM 1249 / CCUG 213 / NBRC 12614 / NCIMB 9131 / NCTC 9757 / MK), this protein is Succinyl-diaminopimelate desuccinylase.